Reading from the N-terminus, the 339-residue chain is Terpene synthase 9 (339 aa).

A DDxx(x)D/E motif motif is present at residues 79-84 (DDFLES). An NDxxSxxxD/E motif motif is present at residues 219 to 227 (NDCASYAKE).

It belongs to the terpene synthase family.

The catalysed reaction is (2E,6E)-farnesyl diphosphate = (-)-beta-barbatene + diphosphate. It carries out the reaction (2E,6E)-farnesyl diphosphate = (E)-beta-farnesene + diphosphate. It catalyses the reaction (2E)-geranyl diphosphate = (Z)-beta-ocimene + diphosphate. The enzyme catalyses (2E)-geranyl diphosphate + H2O = linalool + diphosphate. The catalysed reaction is (2E)-geranyl diphosphate = beta-myrcene + diphosphate. Its function is as follows. Terpene synthase that converts its substrate farnesyl diphosphate (FPP) into the sesquiterpene beta-barbatene as a major product as well as (E)-beta-farnesene as a minor product. Is also able to convert geranyl diphosphate (GPP) into a mixture of monoterpenes including (Z)-beta-ocimene, linalool, beta-myrcene, limonene and alpha-terpineol. The chain is Terpene synthase 9 from Dictyostelium discoideum (Social amoeba).